A 119-amino-acid chain; its full sequence is Toxin ICK-11 (119 aa).

The signal sequence occupies residues 1–19; the sequence is MMKLYSLVIIATLAAAAFA. Disulfide bonds link cysteine 59–cysteine 74, cysteine 67–cysteine 80, cysteine 71–cysteine 116, and cysteine 73–cysteine 87.

Belongs to the neurotoxin 25 family. ICK-8 subfamily. In terms of tissue distribution, expressed by the venom gland.

The protein localises to the secreted. Its function is as follows. Ion channel inhibitor. This chain is Toxin ICK-11, found in Trittame loki (Brush-footed trapdoor spider).